The chain runs to 187 residues: F-box protein At5g41720 (187 aa).

Positions 2–49 (MMNSPLDYDVLLEIMSYCPATEMAKFRLLSKECNKRSYEMSFINRHLH) constitute an F-box domain.

The chain is F-box protein At5g41720 from Arabidopsis thaliana (Mouse-ear cress).